The following is a 161-amino-acid chain: Endoribonuclease YbeY (161 aa).

His127, His131, and His137 together coordinate Zn(2+).

This sequence belongs to the endoribonuclease YbeY family. Zn(2+) is required as a cofactor.

It is found in the cytoplasm. Functionally, single strand-specific metallo-endoribonuclease involved in late-stage 70S ribosome quality control and in maturation of the 3' terminus of the 16S rRNA. This chain is Endoribonuclease YbeY, found in Listeria monocytogenes serotype 4b (strain CLIP80459).